Here is a 649-residue protein sequence, read N- to C-terminus: tRNA-guanine(15) transglycosylase (649 aa).

Residue D88 is the Nucleophile of the active site. The substrate site is built by D123 and A194. Zn(2+)-binding residues include C280, C282, and C285. One can recognise a PUA domain in the interval 573 to 648 (KYRIVIDSSV…VAATLRGGLK (76 aa)).

The protein belongs to the archaeosine tRNA-ribosyltransferase family. The cofactor is Zn(2+).

The catalysed reaction is guanosine(15) in tRNA + 7-cyano-7-deazaguanine = 7-cyano-7-carbaguanosine(15) in tRNA + guanine. The protein operates within tRNA modification; archaeosine-tRNA biosynthesis. Its function is as follows. Exchanges the guanine residue with 7-cyano-7-deazaguanine (preQ0) at position 15 in the dihydrouridine loop (D-loop) of archaeal tRNAs. The polypeptide is tRNA-guanine(15) transglycosylase (Methanococcus maripaludis (strain DSM 14266 / JCM 13030 / NBRC 101832 / S2 / LL)).